Consider the following 87-residue polypeptide: Probable Fe(2+)-trafficking protein (87 aa).

This sequence belongs to the Fe(2+)-trafficking protein family.

Its function is as follows. Could be a mediator in iron transactions between iron acquisition and iron-requiring processes, such as synthesis and/or repair of Fe-S clusters in biosynthetic enzymes. This chain is Probable Fe(2+)-trafficking protein, found in Francisella tularensis subsp. novicida (strain U112).